The chain runs to 126 residues: Large ribosomal subunit protein bL19 (126 aa).

The protein belongs to the bacterial ribosomal protein bL19 family.

This protein is located at the 30S-50S ribosomal subunit interface and may play a role in the structure and function of the aminoacyl-tRNA binding site. In Thiobacillus denitrificans (strain ATCC 25259 / T1), this protein is Large ribosomal subunit protein bL19.